A 429-amino-acid polypeptide reads, in one-letter code: Probable M18 family aminopeptidase 2 (429 aa).

Positions 82, 156, and 401 each coordinate Zn(2+).

This sequence belongs to the peptidase M18 family. It depends on Zn(2+) as a cofactor.

The polypeptide is Probable M18 family aminopeptidase 2 (Pseudomonas savastanoi pv. phaseolicola (strain 1448A / Race 6) (Pseudomonas syringae pv. phaseolicola (strain 1448A / Race 6))).